We begin with the raw amino-acid sequence, 231 residues long: Endonuclease NucS (231 aa).

This sequence belongs to the NucS endonuclease family.

It localises to the cytoplasm. Cleaves both 3' and 5' ssDNA extremities of branched DNA structures. This is Endonuclease NucS from Kocuria rhizophila (strain ATCC 9341 / DSM 348 / NBRC 103217 / DC2201).